The following is a 117-amino-acid chain: Ig heavy chain V region 23 (117 aa).

Positions 1-19 are cleaved as a signal peptide; that stretch reads MGWSCIILFLVAAANGVHS. The tract at residues 20–49 is framework-1; the sequence is QVQLQQPGTELVKPGASVKLSCKASGYTFT. Cys41 and Cys115 are joined by a disulfide. Residues 50–54 are complementarity-determining-1; that stretch reads SYWMH. Residues 55–68 are framework-2; that stretch reads WVKQRPGQGLEWIG. The tract at residues 69-85 is complementarity-determining-2; sequence NINPGNGGTNYNEKFKS. A framework-3 region spans residues 86-117; it reads KVTLTVDKSSSTAYTQLSSLTSEDSAVYYCAR.

In Mus musculus (Mouse), this protein is Ig heavy chain V region 23.